The chain runs to 312 residues: Methionyl-tRNA formyltransferase (312 aa).

109-112 (SLLP) is a (6S)-5,6,7,8-tetrahydrofolate binding site.

It belongs to the Fmt family.

The catalysed reaction is L-methionyl-tRNA(fMet) + (6R)-10-formyltetrahydrofolate = N-formyl-L-methionyl-tRNA(fMet) + (6S)-5,6,7,8-tetrahydrofolate + H(+). In terms of biological role, attaches a formyl group to the free amino group of methionyl-tRNA(fMet). The formyl group appears to play a dual role in the initiator identity of N-formylmethionyl-tRNA by promoting its recognition by IF2 and preventing the misappropriation of this tRNA by the elongation apparatus. This is Methionyl-tRNA formyltransferase from Listeria monocytogenes serovar 1/2a (strain ATCC BAA-679 / EGD-e).